Here is a 680-residue protein sequence, read N- to C-terminus: Tumor protein 63 (680 aa).

The segment at 1-107 is transcription activation; the sequence is MNFETSRCAT…MQDSDLSDPM (107 aa). Positions 123–157 are enriched in polar residues; that stretch reads QIQNGSSSTSPYNTDHAQNSVTAPSPYAQPSSTFD. Positions 123-171 are disordered; it reads QIQNGSSSTSPYNTDHAQNSVTAPSPYAQPSSTFDALSPSPAIPSNTDY. Residues 170–362 mediate DNA binding; that stretch reads DYPGPHSFDV…KADEDSIRKQ (193 aa). Positions 244, 247, 308, and 312 each coordinate Zn(2+). Over residues 351-360 the composition is skewed to basic and acidic residues; sequence DRKADEDSIR. 2 disordered regions span residues 351–393 and 435–472; these read DRKA…IKKR and YRQQQQQQHQHLLQKQTSIQSPSSYGNSSPPLNKMNSM. Positions 352 to 388 are interaction with HIPK2; it reads RKADEDSIRKQQVSDSTKNGDGTKRPFRQNTHGIQMT. Composition is skewed to polar residues over residues 361–371 and 379–389; these read KQQVSDSTKNG and RQNTHGIQMTS. Residues 394 to 443 are oligomerization; the sequence is RSPDDELLYLPVRGRETYEMLLKIKESLELMQYLPQHTIETYRQQQQQQH. The span at 437–450 shows a compositional bias: low complexity; that stretch reads QQQQQQHQHLLQKQ. Over residues 451-472 the composition is skewed to polar residues; it reads TSIQSPSSYGNSSPPLNKMNSM. An SAM domain is found at 541 to 607; that stretch reads PPYPTDCSIV…WKGILDHRQL (67 aa). The transactivation inhibition stretch occupies residues 610-680; sequence FSSPSHLLRT…KQQRIKEEGE (71 aa). Lysine 676 participates in a covalent cross-link: Glycyl lysine isopeptide (Lys-Gly) (interchain with G-Cter in SUMO).

It belongs to the p53 family. As to quaternary structure, binds DNA as a homotetramer. Isoform composition of the tetramer may determine transactivation activity. Isoforms Alpha and Gamma interact with HIPK2. Interacts with SSRP1, leading to stimulate coactivator activity. Isoform 1 and isoform 2 interact with WWP1. Interacts with PDS5A. Isoform 5 (via activation domain) interacts with NOC2L. Zn(2+) is required as a cofactor. Post-translationally, may be sumoylated. In terms of processing, ubiquitinated. Polyubiquitination involves WWP1 and leads to proteasomal degradation of this protein. As to expression, widely expressed, notably in heart, kidney, placenta, prostate, skeletal muscle, testis and thymus, although the precise isoform varies according to tissue type. Progenitor cell layers of skin, breast, eye and prostate express high levels of DeltaN-type isoforms. Isoform 10 is predominantly expressed in skin squamous cell carcinomas, but not in normal skin tissues.

The protein resides in the nucleus. Its function is as follows. Acts as a sequence specific DNA binding transcriptional activator or repressor. The isoforms contain a varying set of transactivation and auto-regulating transactivation inhibiting domains thus showing an isoform specific activity. Isoform 2 activates RIPK4 transcription. May be required in conjunction with TP73/p73 for initiation of p53/TP53 dependent apoptosis in response to genotoxic insults and the presence of activated oncogenes. Involved in Notch signaling by probably inducing JAG1 and JAG2. Plays a role in the regulation of epithelial morphogenesis. The ratio of DeltaN-type and TA*-type isoforms may govern the maintenance of epithelial stem cell compartments and regulate the initiation of epithelial stratification from the undifferentiated embryonal ectoderm. Required for limb formation from the apical ectodermal ridge. Activates transcription of the p21 promoter. This chain is Tumor protein 63 (TP63), found in Homo sapiens (Human).